The sequence spans 47 residues: Defensin Tk-AMP-D1.1 (47 aa).

Cystine bridges form between C3–C47, C14–C34, C20–C41, and C24–C43.

Its function is as follows. Plant defense peptide. This Triticum kiharae (Wheat) protein is Defensin Tk-AMP-D1.1.